The sequence spans 461 residues: Putative forkhead-related transcription factor fkh-5 (461 aa).

Residues 171-262 constitute a DNA-binding region (fork-head); that stretch reads QRPQLSYQLL…VEKEMIDVKT (92 aa).

Its subcellular location is the nucleus. Transcription factor. Binds to DNA sequence motif 5'-CTGTTTCA-3'. Regulates expression of a class of small RNAs, known as 21U-RNAs, perhaps acting redundantly with fkh-4 and fkh-3. In Caenorhabditis elegans, this protein is Putative forkhead-related transcription factor fkh-5 (fkh-5).